Here is a 285-residue protein sequence, read N- to C-terminus: Probable adenylate kinase 6, chloroplastic (285 aa).

A chloroplast-targeting transit peptide spans 1-33; that stretch reads MAAISRAIRACAAAGSRRSMASSAKEVAAAGAR. 63-68 provides a ligand contact to ATP; that stretch reads GVGKGT. The segment at 83-112 is NMP; the sequence is ATGDLVRDALASPGPFSEQLAEIVNNGKLV. AMP-binding positions include Thr84, Arg89, 110–112, 140–143, and Gln147; these read KLV and GFPR. Residues 176-224 are LID; it reads GRRMCSQCGGNFNVASIDMEGENGGPRMYMPPLLPPPQCESKLITRPDD. Residues Arg177 and 186–187 each bind ATP; that span reads NF. AMP-binding residues include Arg221 and Arg232.

Belongs to the adenylate kinase family.

The protein localises to the plastid. Its subcellular location is the chloroplast. It catalyses the reaction AMP + ATP = 2 ADP. In terms of biological role, catalyzes the reversible transfer of the terminal phosphate group between ATP and AMP. Plays an important role in cellular energy homeostasis and in adenine nucleotide metabolism. This Oryza sativa subsp. japonica (Rice) protein is Probable adenylate kinase 6, chloroplastic.